The chain runs to 1541 residues: Regulator of G-protein signaling loco (1541 aa).

Positions 1-66 are disordered; sequence MHHHHPPLPI…RRKKRANYNY (66 aa). A compositionally biased stretch (low complexity) spans 11-36; that stretch reads TGASGSTAVGTGAAAAEDASPAANSG. Positions 40-53 are enriched in polar residues; that stretch reads ISTSTTPSGSNSQQ. The PDZ domain occupies 71–148; it reads TVEVRRGYNG…SIRMQIAENY (78 aa). The segment at 182 to 222 is disordered; it reads AKLHRLRNSPQKKLNPPEAVEPHKSKSSPDHPTLKPVLEDP. Over residues 201–214 the composition is skewed to basic and acidic residues; sequence VEPHKSKSSPDHPT. In terms of domain architecture, PID spans 247-423; that stretch reads AALECRVIVG…VVNLVRSMYT (177 aa). Disordered stretches follow at residues 449–473 and 708–761; these read GAVA…SNSD and SEPD…ASMN. Composition is skewed to polar residues over residues 457–473 and 744–761; these read PQPS…SNSD and EQQQ…ASMN. The region spanning 827-943 is the RGS domain; it reads SFERMLQDAA…IRSDLYKSCV (117 aa). The tract at residues 978–1004 is disordered; it reads SASNAEDRRRKSLLPWHRKTRSKSRDR. Residues 987–999 show a composition bias toward basic residues; the sequence is RKSLLPWHRKTRS. RBD domains lie at 1072-1142 and 1143-1213; these read SLCR…IERR and VAFK…IVMV. The interval 1258 to 1327 is disordered; that stretch reads DAAASEKSRP…SEEAATTQAV (70 aa). Polar residues predominate over residues 1273–1285; the sequence is MKSNEAPSETSSL. Over residues 1312-1325 the composition is skewed to low complexity; that stretch reads TSSSQQSEEAATTQ. The 23-residue stretch at 1354 to 1376 folds into the GoLoco domain; the sequence is QDELLEGLKRAQLARLEDQRGTE. The segment at 1410-1513 is disordered; sequence KVPATPTEIP…ASKPGTFASK (104 aa). Positions 1460-1469 are enriched in pro residues; the sequence is APPPLPPKPK. Over residues 1483 to 1499 the composition is skewed to polar residues; sequence PTGNYCNKYSPSKQVPT.

As to quaternary structure, interacts (via GoLoco and RGS domains) with Galphai (via GDP- or GTP-bound forms). In terms of tissue distribution, expressed in surface and longitudinal glial cells, gut and heart (at protein level).

It localises to the cytoplasm. The protein localises to the cell membrane. Its subcellular location is the apical cell membrane. Functionally, acts as a regulator of G protein signaling (RGS). Modulates G protein alpha subunits nucleotide exchange and hydrolysis activities by functioning either as a GTPase-activating protein (GAP), thereby driving G protein alpha subunits into their inactive GDP-bound form, or as a GDP-dissociation inhibitor (GDI). Confers GDI and GAP activities on G(i) alpha subunit Galphai. Confers GAP activity on G(o)-alpha subunit Galphao and G(i) alpha subunit Galphai. Involved in the dorsal-ventral axis formation of the egg. Acts as a G-protein signaling for glial cell differentiation during embryogenesis; Galphai, Galphao and the G-protein coupled receptor, moody, are required in the surface glia to achieve effective insulation of the nerve cord. May be essential for nurse cell dumping during oogenesis. Required in neuroblast asymmetrical cell division. Plays a role in stress resistance and life span control. In Drosophila melanogaster (Fruit fly), this protein is Regulator of G-protein signaling loco (loco).